Here is a 74-residue protein sequence, read N- to C-terminus: MRAIISLLLISTMVFGVIEAVSLEEGLKIFEGERGDCVGESQQCADWSGPYCCKGYYCTCRYFPKCICVNDNGK.

The N-terminal stretch at 1 to 20 is a signal peptide; it reads MRAIISLLLISTMVFGVIEA. Positions 21–34 are excised as a propeptide; the sequence is VSLEEGLKIFEGER. Cystine bridges form between Cys37-Cys53, Cys44-Cys58, Cys52-Cys68, and Cys60-Cys66. Residue Asn72 is modified to Asparagine amide.

Belongs to the neurotoxin 07 (Beta/delta-agtx) family. 03 (aga-4) subfamily. Aga sub-subfamily. In terms of tissue distribution, expressed by the venom gland.

The protein localises to the secreted. Its function is as follows. Insecticidal neurotoxin that modulates the insect Nav channel (DmNaV1/tipE (para/tipE)) in a unique manner, with both the activation and inactivation processes being affected. The voltage dependence of activation is shifted toward more hyperpolarized potentials (analogous to site 4 toxins) and a non-inactivating persistent sodium current is induced (site 3-like action). Interestingly, both effects take place in a voltage-dependent manner, producing a bell-shaped curve between -80 and 0 mV. In vivo, induces an irreversible spastic paralysis when injected into insects. This Agelena orientalis (Funnel-web spider) protein is U3-agatoxin-Ao1f.